The chain runs to 598 residues: IQ calmodulin-binding motif-containing protein 1 (598 aa).

The interval 1-157 is interaction with BBS1, BBS8 and BBS9; that stretch reads MKPAGTDPRI…SLFWLLGGHV (157 aa). The tract at residues 287–598 is interaction with CEP290, BBS1, BBS2, BBS4, BBS5, BBS7, BBS8 and BBS9; that stretch reads QEVEEQKLHK…MLFIGGTKPP (312 aa). IQ domains are found at residues 294–317, 318–338, 387–416, and 417–437; these read LHKA…LKKL, PSAV…MMLE, EEKS…SLTE, and YKAA…CRKK. Residues 336–362 are a coiled coil; sequence MLELNRQKEEEDLRLKLQLQRQRAMRL. Positions 530-598 are interaction with BBS1, BBS2, BBS4, BBS7, BBS8 and BBS9; the sequence is AEGKEPEQFL…MLFIGGTKPP (69 aa).

Interacts with calmodulin. Interacts with CEP290/NPHP6; IQCB1/NPHP5 and CEP290/NPHP6; are proposed to form a functional NPHP5-6 module localized to the centrosome. Interacts with ATXN10. Interacts with NPHP1, INVS, NPHP4 and RPGRIP1L; these interactions likely require additional interactors. Associates with the BBSome complex; interacts with BBS1, BBS2, BBS4, BBS5, BBS7, BBS8 and BBS9. As to expression, localized to the outer segment and connecting cilia of photoreceptor cells.

The protein resides in the cytoplasm. Its subcellular location is the cytoskeleton. It is found in the microtubule organizing center. The protein localises to the centrosome. Its function is as follows. Involved in ciliogenesis. The function in an early step in cilia formation depends on its association with CEP290/NPHP6. Involved in regulation of the BBSome complex integrity, specifically for presence of BBS2 and BBS5 in the complex, and in ciliary targeting of selected BBSome cargos. May play a role in controlling entry of the BBSome complex to cilia possibly implicating CEP290/NPHP6. The sequence is that of IQ calmodulin-binding motif-containing protein 1 (Iqcb1) from Mus musculus (Mouse).